We begin with the raw amino-acid sequence, 172 residues long: R-phycocyanin beta chain (172 aa).

The (2R,3E)-phycoerythrobilin site is built by Asn35 and Asp39. (2R,3E)-phycocyanobilin is bound by residues Asn72, Cys82, and 84–85 (RD). Asn72 is modified (N4-methylasparagine). (2R,3E)-phycoerythrobilin is bound by residues 149-151 (PAG) and Cys153.

The protein belongs to the phycobiliprotein family. In terms of assembly, heterododecamer of 6 alpha and 6 beta chains. The basic functional unit of phycobiliproteins is a ring-shaped hexamer formed from two back-to-back trimers contacting via the alpha chain subunits. The trimers are composed of alpha/beta subunit heterodimers arranged around a three-fold axis of symmetry. The phycoerythrins also contain a gamma subunit which is located in the center of the hexamer. Post-translationally, contains one covalently linked phycocyanobilin chromophore and one covalently linked phycoerythrobilin chromophore.

Its subcellular location is the plastid. It localises to the chloroplast thylakoid membrane. Light-harvesting photosynthetic tetrapyrrole chromophore-protein from the phycobiliprotein complex (phycobilisome, PBS). Phycocyanin is the major phycobiliprotein in the PBS rod. The sequence is that of R-phycocyanin beta chain (rpcB) from Polysiphonia urceolata (Red alga).